The sequence spans 248 residues: PF03932 family protein CutC (248 aa).

It belongs to the CutC family. Homodimer.

Its subcellular location is the cytoplasm. The protein is PF03932 family protein CutC of Salmonella heidelberg (strain SL476).